The chain runs to 591 residues: DNA ligase (591 aa).

NAD(+) contacts are provided by residues 38–42, 87–88, and glutamate 119; these read DEKYD and SL. The active-site N6-AMP-lysine intermediate is lysine 121. NAD(+) contacts are provided by arginine 142, glutamate 181, lysine 298, and lysine 322. Positions 415, 418, 433, and 439 each coordinate Zn(2+).

The protein belongs to the NAD-dependent DNA ligase family. LigA subfamily. It depends on Mg(2+) as a cofactor. Mn(2+) is required as a cofactor.

The enzyme catalyses NAD(+) + (deoxyribonucleotide)n-3'-hydroxyl + 5'-phospho-(deoxyribonucleotide)m = (deoxyribonucleotide)n+m + AMP + beta-nicotinamide D-nucleotide.. In terms of biological role, DNA ligase that catalyzes the formation of phosphodiester linkages between 5'-phosphoryl and 3'-hydroxyl groups in double-stranded DNA using NAD as a coenzyme and as the energy source for the reaction. It is essential for DNA replication and repair of damaged DNA. The chain is DNA ligase from Wigglesworthia glossinidia brevipalpis.